Reading from the N-terminus, the 980-residue chain is Hypoxia up-regulated protein 1 (980 aa).

A signal peptide spans 1-24; that stretch reads MREKLSLWAIFCLVVAFLPSQTES. 2 disordered regions span residues 558–682 and 894–980; these read EEES…DIAV and KPKP…EDEL. 2 stretches are compositionally biased toward basic and acidic residues: residues 599–656 and 896–906; these read AGKE…PEEK and KPKDKAKDKNS. Residues 907–916 are compositionally biased toward polar residues; that stretch reads TSESSKANST. Basic and acidic residues-rich tracts occupy residues 918–949 and 960–980; these read DAEK…KAEE and TDDK…EDEL. The Prevents secretion from ER motif lies at 977–980; that stretch reads EDEL.

This sequence belongs to the heat shock protein 70 family.

The protein localises to the endoplasmic reticulum lumen. Its function is as follows. Has a pivotal role in cytoprotective cellular mechanisms triggered by oxygen deprivation. May play a role as a molecular chaperone and participate in protein folding. This is Hypoxia up-regulated protein 1 (hyou1) from Danio rerio (Zebrafish).